We begin with the raw amino-acid sequence, 365 residues long: Cobalt-precorrin-5B C(1)-methyltransferase (365 aa).

The protein belongs to the CbiD family.

The catalysed reaction is Co-precorrin-5B + S-adenosyl-L-methionine = Co-precorrin-6A + S-adenosyl-L-homocysteine. It participates in cofactor biosynthesis; adenosylcobalamin biosynthesis; cob(II)yrinate a,c-diamide from sirohydrochlorin (anaerobic route): step 6/10. Catalyzes the methylation of C-1 in cobalt-precorrin-5B to form cobalt-precorrin-6A. In Polaromonas naphthalenivorans (strain CJ2), this protein is Cobalt-precorrin-5B C(1)-methyltransferase.